The chain runs to 3412 residues: Genome polyprotein (3412 aa).

Residues 1–30 (MAGKAILKGKGGGPPRRVSKETAKKTRQSR) form a disordered region. The Cytoplasmic portion of the chain corresponds to 1–98 (MAGKAILKGK…LQRRGKRRSA (98 aa)). A propeptide spans 97–117 (SAVDWTGWLLVVVLLGVTLAA) (ER anchor for the capsid protein C, removed in mature form by serine protease NS3). A helical transmembrane segment spans residues 99–119 (VDWTGWLLVVVLLGVTLAATV). Residues 120–242 (RKERDGTTVI…HLTRVEGWVW (123 aa)) are Extracellular-facing. N-linked (GlcNAc...) asparagine; by host glycosylation is present at Asn-144. Residues 243-260 (KNKVLTLAVIAVVWLTVE) traverse the membrane as a helical segment. Residue Ser-261 is a topological domain, cytoplasmic. The chain crosses the membrane as a helical span at residues 262–280 (VVTRVAVVVVLLCLAPVYA). At 281 to 727 (SRCTHLENRD…HTVLGGAFNS (447 aa)) the chain is on the extracellular side. 6 disulfides stabilise this stretch: Cys-283–Cys-310, Cys-340–Cys-396, Cys-340–Cys-401, Cys-354–Cys-385, Cys-372–Cys-396, and Cys-372–Cys-401. The segment at 378–391 (DRGWGNHCGLFGKG) is fusion peptide. Asn-434 carries an N-linked (GlcNAc...) asparagine; by host glycan. Intrachain disulfides connect Cys-466–Cys-570 and Cys-587–Cys-618. The chain crosses the membrane as a helical span at residues 728–748 (LFGGVGFLPKILVGVVLAWLG). The Cytoplasmic portion of the chain corresponds to 749-755 (LNMRNPT). A helical membrane pass occupies residues 756–776 (MSMSFLLAGGLVLAMTLGVGA). Over 777-1187 (DVGCAVDTER…LVKIESLVRY (411 aa)) the chain is Extracellular. 6 disulfide bridges follow: Cys-780-Cys-791, Cys-831-Cys-920, Cys-955-Cys-1000, Cys-1057-Cys-1106, Cys-1068-Cys-1090, and Cys-1089-Cys-1093. Residues Asn-861, Asn-983, and Asn-999 are each glycosylated (N-linked (GlcNAc...) asparagine; by host). Residues 1188 to 1208 (VVAVGITFHLELGPEIVALTL) traverse the membrane as a helical segment. Over 1209-1236 (LQAVFELRVGLLSAFALRSNLTVREMVT) the chain is Cytoplasmic. Residues 1237–1257 (IYFLLLVLELGLPSEGLGALW) form a helical membrane-spanning segment. Residues 1258 to 1293 (KWGDALAMGALIFRACTAEEKTGVGLLLMALMTQQD) lie on the Lumenal side of the membrane. Residues 1294-1314 (LATVHYGLMLFLGVASCCSIW) form a helical membrane-spanning segment. The Cytoplasmic segment spans residues 1315–1327 (KLIRGHREQKGLT). A helical membrane pass occupies residues 1328-1348 (WIVPLAGLLGGEGSGVRLVAF). Residues 1349 to 1359 (WELTVHGRRRS) are Cytoplasmic-facing. A helical transmembrane segment spans residues 1360–1378 (FSEPLTVVGVMLTLASGMI). Residues 1379-1382 (RHTS) lie on the Lumenal side of the membrane. Residues 1383-1403 (QEALCALAVASFLLLMLVLGT) traverse the membrane as a helical segment. The Cytoplasmic portion of the chain corresponds to 1404 to 1454 (RKMQLVAEWSGCVEWHPELMNEGGEVSLRVRQDSMGNFHLTELEKEERVMA). Positions 1410–1449 (AEWSGCVEWHPELMNEGGEVSLRVRQDSMGNFHLTELEKE) are interacts with and activates NS3 protease. Positions 1455–1475 (FWLLAGLAASAFHWSGILGVM) form an intramembrane region, helical. At 1476–2160 (GLWTLSEMLR…KMAERDAPEA (685 aa)) the chain is on the cytoplasmic side. The Peptidase S7 domain occupies 1490 to 1669 (SGLVFSGQGG…EAEKSRPNLP (180 aa)). Catalysis depends on charge relay system; for serine protease NS3 activity residues His-1543, Asp-1567, and Ser-1627. In terms of domain architecture, Helicase ATP-binding spans 1675–1831 (TGWTAKGQIT…ESNGAISSEE (157 aa)). 1688–1695 (MHPGSGKT) serves as a coordination point for ATP. Positions 1779 to 1782 (DEAH) match the DEAH box motif. A Helicase C-terminal domain is found at 1841 to 2000 (DGFDWITEYE…TLRGPVATFY (160 aa)). Lys-1883 carries the N6-acetyllysine; by host modification. The chain crosses the membrane as a helical span at residues 2161–2181 (FLTVVEMMVLGLATLGVVWCF). At 2182-2189 (VVRTSISR) the chain is on the lumenal side. An intramembrane region (helical) is located at residues 2190–2210 (MMLGTLVLLASLALLWAGGVS). Tyr-2211 is a topological domain (lumenal). Residues 2212 to 2232 (GNMAGVALIFYTLLTVLQPEA) form a helical membrane-spanning segment. The Cytoplasmic segment spans residues 2233–2244 (GKQRSSDDNKLA). A helical transmembrane segment spans residues 2245-2265 (YFLLTLCSLAGLVAANEMGFL). The Lumenal segment spans residues 2266-2299 (EKTKADLSTVLWSEHEELRSWEEWTNIDIQPARS). An intramembrane region (helical) is located at residues 2300–2320 (WGTYVLVVSLFTPYIIHQLQT). Residues 2321–2343 (KIQQLVNSAVATGAQAMRDLGGG) are Lumenal-facing. The segment at residues 2344 to 2364 (APFFGVAGHVMALGVVSLVGA) is an intramembrane region (helical). Topologically, residues 2365-2368 (TPTS) are lumenal. The helical transmembrane segment at 2369–2389 (LVVGVGLAAFHLAIVVSGLEA) threads the bilayer. Topologically, residues 2390-2430 (ELTQRAHKVFFSAMVRNPMVDGDVINPFGEGEAKPALYERK) are cytoplasmic. The chain crosses the membrane as a helical span at residues 2431–2451 (MSLVLAIVLCLMSVVMNRTVP). Residues 2452-2476 (STPRLLLWDWRQRDNCSNQRRTPFG) are Lumenal-facing. A helical membrane pass occupies residues 2477-2497 (RCQACGLSGVVRGSLWGFCPL). Over 2498–3412 (GHRLWLRASG…WESKLESSII (915 aa)) the chain is Cytoplasmic. Residues 2511-2775 (GGSEGDTLGD…ELDLGVGTRC (265 aa)) form the mRNA cap 0-1 NS5-type MT domain. Residue Ser-2566 participates in S-adenosyl-L-methionine binding. Ser-2566 is modified (phosphoserine). Lys-2571 functions as the For 2'-O-MTase activity in the catalytic mechanism. Residues Gly-2596, Trp-2597, Ile-2615, Asp-2641, and Val-2642 each coordinate S-adenosyl-L-methionine. Asp-2656 (for 2'-O-MTase activity) is an active-site residue. An S-adenosyl-L-methionine-binding site is contributed by Ile-2657. Catalysis depends on for 2'-O-MTase activity residues Lys-2693 and Glu-2729. An interaction with host SCRIB region spans residues 2729 to 2733 (EMYYS). S-adenosyl-L-methionine is bound at residue Tyr-2731. Zn(2+) contacts are provided by Glu-2948, His-2952, Cys-2957, and Cys-2960. Positions 3038 to 3187 (GLFYADDTAG…RPVDDRFSGA (150 aa)) constitute a RdRp catalytic domain. Positions 3222, 3238, and 3357 each coordinate Zn(2+).

This sequence in the N-terminal section; belongs to the class I-like SAM-binding methyltransferase superfamily. mRNA cap 0-1 NS5-type methyltransferase family. As to quaternary structure, homodimer. Interacts (via N-terminus) with host EXOC1 (via C-terminus); this interaction results in EXOC1 degradation through the proteasome degradation pathway. In terms of assembly, forms heterodimers with envelope protein E in the endoplasmic reticulum and Golgi. Homodimer; in the endoplasmic reticulum and Golgi. Interacts with protein prM. Interacts with non-structural protein 1. As to quaternary structure, homodimer; Homohexamer when secreted. Interacts with envelope protein E. In terms of assembly, interacts (via N-terminus) with serine protease NS3. Forms a heterodimer with serine protease NS3. May form homooligomers. As to quaternary structure, forms a heterodimer with NS2B. Interacts with non-structural protein 2A (via N-terminus). Interacts with NS4B. Interacts with unphosphorylated RNA-directed RNA polymerase NS5; this interaction stimulates RNA-directed RNA polymerase NS5 guanylyltransferase activity. In terms of assembly, interacts with serine protease NS3. Interacts with NS1. Homodimer. Interacts with host STAT2; this interaction inhibits the phosphorylation of the latter, and, when all viral proteins are present (polyprotein), targets STAT2 for degradation. Interacts with serine protease NS3. Interacts with host SCRIB; this interaction targets NS5 to the cell membrane periphery and nucleus, thereby allowing efficient host nuclear STAT1 inhibition. Post-translationally, specific enzymatic cleavages in vivo yield mature proteins. Cleavages in the lumen of endoplasmic reticulum are performed by host signal peptidase, whereas cleavages in the cytoplasmic side are performed by serine protease NS3. Signal cleavage at the 2K-4B site requires a prior NS3 protease-mediated cleavage at the 4A-2K site. Cleaved in post-Golgi vesicles by a host furin, releasing the mature small envelope protein M, and peptide pr. This cleavage is incomplete as up to 30% of viral particles still carry uncleaved prM. In terms of processing, N-glycosylated. Post-translationally, N-glycosylated. The excreted form is glycosylated and this is required for efficient secretion of the protein from infected cells. Acetylated by host KAT5. Acetylation modulates NS3 RNA-binding and unwinding activities and plays an important positive role for viral replication. In terms of processing, phosphorylated on serines residues. This phosphorylation may trigger NS5 nuclear localization.

It localises to the virion. The protein localises to the host nucleus. It is found in the host cytoplasm. The protein resides in the host perinuclear region. Its subcellular location is the secreted. It localises to the virion membrane. The protein localises to the host endoplasmic reticulum membrane. It catalyses the reaction Selective hydrolysis of -Xaa-Xaa-|-Yaa- bonds in which each of the Xaa can be either Arg or Lys and Yaa can be either Ser or Ala.. The catalysed reaction is RNA(n) + a ribonucleoside 5'-triphosphate = RNA(n+1) + diphosphate. The enzyme catalyses a ribonucleoside 5'-triphosphate + H2O = a ribonucleoside 5'-diphosphate + phosphate + H(+). It carries out the reaction ATP + H2O = ADP + phosphate + H(+). It catalyses the reaction a 5'-end (5'-triphosphoguanosine)-ribonucleoside in mRNA + S-adenosyl-L-methionine = a 5'-end (N(7)-methyl 5'-triphosphoguanosine)-ribonucleoside in mRNA + S-adenosyl-L-homocysteine. The catalysed reaction is a 5'-end (N(7)-methyl 5'-triphosphoguanosine)-ribonucleoside in mRNA + S-adenosyl-L-methionine = a 5'-end (N(7)-methyl 5'-triphosphoguanosine)-(2'-O-methyl-ribonucleoside) in mRNA + S-adenosyl-L-homocysteine + H(+). In terms of biological role, plays a role in virus budding by binding to the cell membrane and gathering the viral RNA into a nucleocapsid that forms the core of a mature virus particle. During virus entry, may induce genome penetration into the host cytoplasm after hemifusion induced by the surface proteins. Can migrate to the cell nucleus where it modulates host functions. Inhibits RNA silencing by interfering with host Dicer. Its function is as follows. Prevents premature fusion activity of envelope proteins in trans-Golgi by binding to envelope protein E at pH6.0. After virion release in extracellular space, gets dissociated from E dimers. Functionally, acts as a chaperone for envelope protein E during intracellular virion assembly by masking and inactivating envelope protein E fusion peptide. prM is the only viral peptide matured by host furin in the trans-Golgi network probably to avoid catastrophic activation of the viral fusion activity in acidic Golgi compartment prior to virion release. prM-E cleavage is inefficient, and many virions are only partially matured. These uncleaved prM would play a role in immune evasion. In terms of biological role, may play a role in virus budding. Exerts cytotoxic effects by activating a mitochondrial apoptotic pathway through M ectodomain. May display a viroporin activity. Binds to host cell surface receptor and mediates fusion between viral and cellular membranes. Envelope protein is synthesized in the endoplasmic reticulum in the form of heterodimer with protein prM. They play a role in virion budding in the ER, and the newly formed immature particle is covered with 60 spikes composed of heterodimer between precursor prM and envelope protein E. The virion is transported to the Golgi apparatus where the low pH causes dissociation of PrM-E heterodimers and formation of E homodimers. prM-E cleavage is inefficient, and many virions are only partially matured. These uncleaved prM would play a role in immune evasion. Its function is as follows. Involved in immune evasion, pathogenesis and viral replication. Once cleaved off the polyprotein, is targeted to three destinations: the viral replication cycle, the plasma membrane and the extracellular compartment. Essential for viral replication. Required for formation of the replication complex and recruitment of other non-structural proteins to the ER-derived membrane structures. Excreted as a hexameric lipoparticle that plays a role against host immune response. Antagonizing the complement function. Binds to the host macrophages and dendritic cells. Inhibits signal transduction originating from Toll-like receptor 3 (TLR3). Functionally, component of the viral RNA replication complex that functions in virion assembly and antagonizes the host immune response. In terms of biological role, required cofactor for the serine protease function of NS3. May have membrane-destabilizing activity and form viroporins. Displays three enzymatic activities: serine protease, NTPase and RNA helicase. NS3 serine protease, in association with NS2B, performs its autocleavage and cleaves the polyprotein at dibasic sites in the cytoplasm: C-prM, NS2A-NS2B, NS2B-NS3, NS3-NS4A, NS4A-2K and NS4B-NS5. NS3 RNA helicase binds RNA and unwinds dsRNA in the 3' to 5' direction. Its function is as follows. Regulates the ATPase activity of the NS3 helicase activity. NS4A allows NS3 helicase to conserve energy during unwinding. Functionally, functions as a signal peptide for NS4B and is required for the interferon antagonism activity of the latter. In terms of biological role, induces the formation of ER-derived membrane vesicles where the viral replication takes place. Inhibits interferon (IFN)-induced host STAT1 phosphorylation and nuclear translocation, thereby preventing the establishment of cellular antiviral state by blocking the IFN-alpha/beta pathway. Inhibits STAT2 translocation in the nucleus after IFN-alpha treatment. Replicates the viral (+) and (-) genome, and performs the capping of genomes in the cytoplasm. NS5 methylates viral RNA cap at guanine N-7 and ribose 2'-O positions. Besides its role in RNA genome replication, also prevents the establishment of cellular antiviral state by blocking the interferon-alpha/beta (IFN-alpha/beta) signaling pathway. Inhibits host TYK2 and STAT2 phosphorylation, thereby preventing activation of JAK-STAT signaling pathway. The chain is Genome polyprotein from Homo sapiens (Human).